Consider the following 59-residue polypeptide: UPF0391 membrane protein Geob_0344 (59 aa).

The next 2 membrane-spanning stretches (helical) occupy residues 4-24 (WAAI…TGIA) and 33-53 (FLFI…ITAG).

This sequence belongs to the UPF0391 family.

The protein resides in the cell membrane. The sequence is that of UPF0391 membrane protein Geob_0344 from Geotalea daltonii (strain DSM 22248 / JCM 15807 / FRC-32) (Geobacter daltonii).